The chain runs to 431 residues: Glucose-1-phosphate adenylyltransferase (431 aa).

Lys-39 contributes to the beta-D-fructose 1,6-bisphosphate binding site. AMP contacts are provided by Arg-40, His-46, and Arg-52. Tyr-114 contacts alpha-D-glucose 1-phosphate. Arg-130 contributes to the AMP binding site. Residues Gly-179, 194–195 (EK), and Ser-212 each bind alpha-D-glucose 1-phosphate. Residues Glu-370 and Arg-386 each coordinate AMP. Beta-D-fructose 1,6-bisphosphate contacts are provided by residues 419-423 (REMLR) and 429-431 (QER).

The protein belongs to the bacterial/plant glucose-1-phosphate adenylyltransferase family. In terms of assembly, homotetramer.

It catalyses the reaction alpha-D-glucose 1-phosphate + ATP + H(+) = ADP-alpha-D-glucose + diphosphate. Its pathway is glycan biosynthesis; glycogen biosynthesis. Its activity is regulated as follows. Allosterically activated by fructose-1,6-bisphosphate (F16BP) and inhibited by AMP. In terms of biological role, involved in the biosynthesis of ADP-glucose, a building block required for the elongation reactions to produce glycogen. Catalyzes the reaction between ATP and alpha-D-glucose 1-phosphate (G1P) to produce pyrophosphate and ADP-Glc. In Salmonella arizonae (strain ATCC BAA-731 / CDC346-86 / RSK2980), this protein is Glucose-1-phosphate adenylyltransferase.